Here is a 447-residue protein sequence, read N- to C-terminus: uncharacterized protein (447 aa).

It belongs to the class-II fumarase/aspartase family.

It is found in the cytoplasm. The protein localises to the nucleus. This is an uncharacterized protein from Schizosaccharomyces pombe (strain 972 / ATCC 24843) (Fission yeast).